The following is a 430-amino-acid chain: MANVVVVGAQWGDEGKGKIVDWLSERADVIARFQGGHNAGHTLVIDGKVYKLSLLPSGIVRPGKLSVIGNGVVLDPWHLVQEIAKLRADGVEISPESLMIAENAVLILPLHGELDRARESQNSVAKIGTTGRGIGPAYEDKVGRRAIRVADLADEATLALRVDRLMVHHDALRRGLGIEPVDREALLAQLREIAPQVLPYAKPVWKVMNEMRKAGKRILFEGAQGALLDIDFGTYPYVTSSNVIAGQAATGTGIGPGAIGFVLGIVKAYTTRVGEGPFPAELQDADGERLGERGREFGTVTGRKRRCGWFDAVLVRQTCATSGVSGIALTKLDVLDGFETLKICVGYELDGERLDHLPIAADQQARCTPIFEELEGWSESTAGARSWADLPGAAVKYVRRIEELIQCPVALLSTSPERDDTILVTDPFED.

GTP-binding positions include 12 to 18 (GDEGKGK) and 40 to 42 (GHT). The active-site Proton acceptor is the Asp13. Asp13 and Gly40 together coordinate Mg(2+). IMP contacts are provided by residues 13-16 (DEGK), 38-41 (NAGH), Thr130, Arg144, Gln224, Thr239, and Arg303. Catalysis depends on His41, which acts as the Proton donor. 299 to 305 (TVTGRKR) is a substrate binding site. Residues Arg305, 331 to 333 (KLD), and 413 to 415 (STS) each bind GTP.

This sequence belongs to the adenylosuccinate synthetase family. As to quaternary structure, homodimer. Mg(2+) serves as cofactor.

The protein resides in the cytoplasm. It carries out the reaction IMP + L-aspartate + GTP = N(6)-(1,2-dicarboxyethyl)-AMP + GDP + phosphate + 2 H(+). Its pathway is purine metabolism; AMP biosynthesis via de novo pathway; AMP from IMP: step 1/2. In terms of biological role, plays an important role in the de novo pathway of purine nucleotide biosynthesis. Catalyzes the first committed step in the biosynthesis of AMP from IMP. This chain is Adenylosuccinate synthetase, found in Cereibacter sphaeroides (strain KD131 / KCTC 12085) (Rhodobacter sphaeroides).